Reading from the N-terminus, the 313-residue chain is Protoheme IX farnesyltransferase (313 aa).

9 helical membrane-spanning segments follow: residues 35–55 (LVIFTALVGLLLAPGYIHPVL), 56–76 (AFTSILCIAVGAGASGALNMW), 98–118 (VSKPEALTFGLVLSFFSVVTL), 120–140 (ILVNWFAAALLAFTIFFYVVI), 153–173 (IVIGGAAGALPPVVAWAAAAG), 180–200 (MLLFAIIFFWTPPHFWALALF), 226–246 (ILLYTIVLVAVAFAPWPLGYF), 248–268 (AIYGITSLALGGWMLLLTLRV), and 285–305 (FKFSILYLFALFAVLLLEVIV).

This sequence belongs to the UbiA prenyltransferase family. Protoheme IX farnesyltransferase subfamily.

It localises to the cell inner membrane. It carries out the reaction heme b + (2E,6E)-farnesyl diphosphate + H2O = Fe(II)-heme o + diphosphate. The protein operates within porphyrin-containing compound metabolism; heme O biosynthesis; heme O from protoheme: step 1/1. Its function is as follows. Converts heme B (protoheme IX) to heme O by substitution of the vinyl group on carbon 2 of heme B porphyrin ring with a hydroxyethyl farnesyl side group. The protein is Protoheme IX farnesyltransferase of Rhodopseudomonas palustris (strain BisB18).